The primary structure comprises 250 residues: tRNA (guanine-N(1)-)-methyltransferase (250 aa).

Residues G116 and 136 to 141 (IGDYVL) each bind S-adenosyl-L-methionine.

It belongs to the RNA methyltransferase TrmD family. As to quaternary structure, homodimer.

It localises to the cytoplasm. The enzyme catalyses guanosine(37) in tRNA + S-adenosyl-L-methionine = N(1)-methylguanosine(37) in tRNA + S-adenosyl-L-homocysteine + H(+). In terms of biological role, specifically methylates guanosine-37 in various tRNAs. In Pseudomonas fluorescens (strain ATCC BAA-477 / NRRL B-23932 / Pf-5), this protein is tRNA (guanine-N(1)-)-methyltransferase.